Reading from the N-terminus, the 887-residue chain is ATP-dependent DNA helicase srs2 (887 aa).

Positions 9–304 (KFLNEEQRIS…LHLERNYRSA (296 aa)) constitute a UvrD-like helicase ATP-binding domain. Residues 33 to 38 (GSGKTR) and Arg-302 each bind ATP. The 293-residue stretch at 305–597 (KPILELALSI…TISTLHAAKG (293 aa)) folds into the UvrD-like helicase C-terminal domain.

It belongs to the helicase family. UvrD subfamily.

The protein localises to the nucleus. It carries out the reaction Couples ATP hydrolysis with the unwinding of duplex DNA by translocating in the 3'-5' direction.. The enzyme catalyses ATP + H2O = ADP + phosphate + H(+). Functionally, ATP-dependent DNA helicase involved in DNA repair at least for UV-induced lesions. Also aids the recombinational repair of camptothecin-induced collapsed replication forks. The protein is ATP-dependent DNA helicase srs2 (srs2) of Schizosaccharomyces pombe (strain 972 / ATCC 24843) (Fission yeast).